Reading from the N-terminus, the 371-residue chain is tRNA-specific 2-thiouridylase MnmA (371 aa).

ATP-binding positions include Gly13–Ser20 and Met39. An interaction with target base in tRNA region spans residues Asn99–Asp101. Catalysis depends on Cys104, which acts as the Nucleophile. A disulfide bridge links Cys104 with Cys200. Residue Gly128 participates in ATP binding. The segment at Lys150–Gln152 is interaction with tRNA. Catalysis depends on Cys200, which acts as the Cysteine persulfide intermediate. The interval Arg308–Tyr309 is interaction with tRNA.

It belongs to the MnmA/TRMU family.

Its subcellular location is the cytoplasm. The enzyme catalyses S-sulfanyl-L-cysteinyl-[protein] + uridine(34) in tRNA + AH2 + ATP = 2-thiouridine(34) in tRNA + L-cysteinyl-[protein] + A + AMP + diphosphate + H(+). Its function is as follows. Catalyzes the 2-thiolation of uridine at the wobble position (U34) of tRNA, leading to the formation of s(2)U34. The polypeptide is tRNA-specific 2-thiouridylase MnmA (Listeria monocytogenes serotype 4a (strain HCC23)).